A 260-amino-acid chain; its full sequence is Indole-3-glycerol phosphate synthase (260 aa).

The protein belongs to the TrpC family.

It carries out the reaction 1-(2-carboxyphenylamino)-1-deoxy-D-ribulose 5-phosphate + H(+) = (1S,2R)-1-C-(indol-3-yl)glycerol 3-phosphate + CO2 + H2O. It functions in the pathway amino-acid biosynthesis; L-tryptophan biosynthesis; L-tryptophan from chorismate: step 4/5. The sequence is that of Indole-3-glycerol phosphate synthase from Staphylococcus saprophyticus subsp. saprophyticus (strain ATCC 15305 / DSM 20229 / NCIMB 8711 / NCTC 7292 / S-41).